A 160-amino-acid chain; its full sequence is Cytochrome b6-f complex subunit 4 (160 aa).

3 consecutive transmembrane segments (helical) span residues 36-56 (LLYMFPVVILGTIACLTGLAV), 95-115 (LLGIVLQSMIPLGLIAIPFIE), and 131-151 (AVFLFGTVFTLYLGIGAALPI).

It belongs to the cytochrome b family. PetD subfamily. The 4 large subunits of the cytochrome b6-f complex are cytochrome b6, subunit IV (17 kDa polypeptide, PetD), cytochrome f and the Rieske protein, while the 4 small subunits are PetG, PetL, PetM and PetN. The complex functions as a dimer.

The protein resides in the cellular thylakoid membrane. Functionally, component of the cytochrome b6-f complex, which mediates electron transfer between photosystem II (PSII) and photosystem I (PSI), cyclic electron flow around PSI, and state transitions. The polypeptide is Cytochrome b6-f complex subunit 4 (Synechococcus elongatus (strain ATCC 33912 / PCC 7942 / FACHB-805) (Anacystis nidulans R2)).